A 341-amino-acid chain; its full sequence is D-erythrose-4-phosphate dehydrogenase (341 aa).

Residue 14–15 coordinates NAD(+); that stretch reads RI. Residues 156-158, Arg202, 215-216, and Arg238 contribute to the substrate site; these read SCT and TR. Residue Cys157 is the Nucleophile of the active site. An NAD(+)-binding site is contributed by Asn320.

This sequence belongs to the glyceraldehyde-3-phosphate dehydrogenase family. Epd subfamily. Homotetramer.

The protein localises to the cytoplasm. It carries out the reaction D-erythrose 4-phosphate + NAD(+) + H2O = 4-phospho-D-erythronate + NADH + 2 H(+). The protein operates within cofactor biosynthesis; pyridoxine 5'-phosphate biosynthesis; pyridoxine 5'-phosphate from D-erythrose 4-phosphate: step 1/5. Catalyzes the NAD-dependent conversion of D-erythrose 4-phosphate to 4-phosphoerythronate. The sequence is that of D-erythrose-4-phosphate dehydrogenase from Idiomarina loihiensis (strain ATCC BAA-735 / DSM 15497 / L2-TR).